We begin with the raw amino-acid sequence, 333 residues long: Fructose-1,6-bisphosphatase class 1 (333 aa).

Mg(2+) contacts are provided by E89, D112, L114, and D115. Substrate contacts are provided by residues D115–S118, N208, Y241, and K271. Position 277 (E277) interacts with Mg(2+).

It belongs to the FBPase class 1 family. Homotetramer. Mg(2+) is required as a cofactor.

The protein resides in the cytoplasm. It carries out the reaction beta-D-fructose 1,6-bisphosphate + H2O = beta-D-fructose 6-phosphate + phosphate. It functions in the pathway carbohydrate biosynthesis; gluconeogenesis. The sequence is that of Fructose-1,6-bisphosphatase class 1 from Haemophilus influenzae (strain ATCC 51907 / DSM 11121 / KW20 / Rd).